Reading from the N-terminus, the 318-residue chain is MDKKIKRVAMVGAGLVGVSVLYSCMNRGLAEQYGIIDINDKLSVGHSLDFEDASAANNHNFSVGKIEYSDLKDYDVVVITAGRPQKPGETRLEMVADNAKIMSNIAKNIKKSGFKGVSIVVANPVDVMTFIYQHETGFDKNRVISSGTSLDSARLRFEISKKLKVHPKSVQAFVLGEHGDSSVSVYSAATVSGKSFNEIVKERGISKKELEDMHTTVYKKAYEIINRKGSTYFGIGSTVAELVEAILTDSHAIFGVGVYLTGQYGVKDLYIGVPTVLGSKGVVEVINFNLTKEEQEKFVSSATILKGNIQKALEAIKG.

The NAD(+) site is built by Val16, Asp37, and Tyr68. Substrate is bound by residues Gln85, Arg91, and 123 to 126; that span reads NPVD. Residues 121-123 and Ser146 contribute to the NAD(+) site; that span reads VAN. 151-154 contacts substrate; that stretch reads DSAR. His178 (proton acceptor) is an active-site residue. The residue at position 222 (Tyr222) is a Phosphotyrosine. Thr231 is a binding site for substrate.

It belongs to the LDH/MDH superfamily. LDH family. In terms of assembly, homotetramer.

Its subcellular location is the cytoplasm. It carries out the reaction (S)-lactate + NAD(+) = pyruvate + NADH + H(+). It functions in the pathway fermentation; pyruvate fermentation to lactate; (S)-lactate from pyruvate: step 1/1. Functionally, catalyzes the conversion of lactate to pyruvate. This is L-lactate dehydrogenase from Mycoplasma mobile (strain ATCC 43663 / 163K / NCTC 11711) (Mesomycoplasma mobile).